The chain runs to 301 residues: Phospholipase A1 (301 aa).

A disulfide bridge links Cys-4 with Cys-87. Ser-137 (nucleophile) is an active-site residue. Asp-165 (charge relay system) is an active-site residue. Disulfide bonds link Cys-176–Cys-181 and Cys-219–Cys-228. The Charge relay system role is filled by His-230. 3 disulfides stabilise this stretch: Cys-245-Cys-269, Cys-246-Cys-294, and Cys-262-Cys-267.

This sequence belongs to the AB hydrolase superfamily. Lipase family. As to expression, expressed by the venom gland.

It localises to the secreted. It carries out the reaction a 1,2-diacyl-sn-glycero-3-phosphocholine + H2O = a 2-acyl-sn-glycero-3-phosphocholine + a fatty acid + H(+). In terms of biological role, catalyzes the hydrolysis of phosphatidylcholine with phospholipase A1 activity. May act as an allergen and induce hemolytic activity. This chain is Phospholipase A1, found in Vespa crabro (European hornet).